The following is a 121-amino-acid chain: Large ribosomal subunit protein uL18 (121 aa).

The protein belongs to the universal ribosomal protein uL18 family. As to quaternary structure, part of the 50S ribosomal subunit; part of the 5S rRNA/L5/L18/L25 subcomplex. Contacts the 5S and 23S rRNAs.

Functionally, this is one of the proteins that bind and probably mediate the attachment of the 5S RNA into the large ribosomal subunit, where it forms part of the central protuberance. The chain is Large ribosomal subunit protein uL18 from Paraburkholderia phymatum (strain DSM 17167 / CIP 108236 / LMG 21445 / STM815) (Burkholderia phymatum).